A 514-amino-acid chain; its full sequence is MDFSSFVASQLNAGTIWPEGIIIITLMVILIGDLIVGRSSKTWLPYVAIAGLLAAVVALYFEWDNPNTLSFLGAFNGDNLSIVFRAIVALSTTVTILMSVRYVEQSGTSLAEFIAIMLTATLGGMFLSGANELVMIFISLEMLSISSYLMTGYMKRDSRSNEAALKYLLIGASSSAIFLYGVSLLYGLSGGETTLDAIAAKITNVNGGQSLGLAIALVFVIAGIAFKISAVPFHQWTPDVYEGSPTPVVAFLSVGSKAAGFALAIRLLVTAFALVSEQWHFIFTALAILSMVLGNVVALAQTSMKRMLAYSSIGQAGFVMIGLTANSDAGYSSMIFYLLIYLFMNLGAFICIILFALRTGTDQISEYSGLYQKDPLLTLGLSICLLSLGGIPPLAGFFGKIYLFWAGWQSGLYGLVLLGLVTSVISIYYYIRVVKMMVVKEPQDMSESVKNYPEIRWNLPGMRPLQVGLVLSVIATSLAGILSNPLFNLATDSVTSTPILQSAVISTQISQADK.

14 helical membrane-spanning segments follow: residues 16 to 36, 43 to 63, 80 to 100, 110 to 130, 133 to 153, 168 to 188, 211 to 231, 245 to 265, 279 to 299, 307 to 327, 335 to 355, 379 to 399, 411 to 431, and 467 to 487; these read IWPEGIIIITLMVILIGDLIV, WLPYVAIAGLLAAVVALYFEW, LSIVFRAIVALSTTVTILMSV, LAEFIAIMLTATLGGMFLSGA, LVMIFISLEMLSISSYLMTGY, LLIGASSSAIFLYGVSLLYGL, LGLAIALVFVIAGIAFKISAV, PTPVVAFLSVGSKAAGFALAI, WHFIFTALAILSMVLGNVVAL, MLAYSSIGQAGFVMIGLTANS, IFYLLIYLFMNLGAFICIILF, LGLSICLLSLGGIPPLAGFFG, GLYGLVLLGLVTSVISIYYYI, and VGLVLSVIATSLAGILSNPLF.

Belongs to the complex I subunit 2 family. In terms of assembly, NDH-1 can be composed of about 15 different subunits; different subcomplexes with different compositions have been identified which probably have different functions.

Its subcellular location is the cellular thylakoid membrane. The enzyme catalyses a plastoquinone + NADH + (n+1) H(+)(in) = a plastoquinol + NAD(+) + n H(+)(out). The catalysed reaction is a plastoquinone + NADPH + (n+1) H(+)(in) = a plastoquinol + NADP(+) + n H(+)(out). Its function is as follows. NDH-1 shuttles electrons from an unknown electron donor, via FMN and iron-sulfur (Fe-S) centers, to quinones in the respiratory and/or the photosynthetic chain. The immediate electron acceptor for the enzyme in this species is believed to be plastoquinone. Couples the redox reaction to proton translocation, and thus conserves the redox energy in a proton gradient. Cyanobacterial NDH-1 also plays a role in inorganic carbon-concentration. The polypeptide is NAD(P)H-quinone oxidoreductase subunit 2 (Gloeothece citriformis (strain PCC 7424) (Cyanothece sp. (strain PCC 7424))).